The primary structure comprises 119 residues: Large ribosomal subunit protein uL18 (119 aa).

This sequence belongs to the universal ribosomal protein uL18 family. Part of the 50S ribosomal subunit; part of the 5S rRNA/L5/L18/L25 subcomplex. Contacts the 5S and 23S rRNAs.

Functionally, this is one of the proteins that bind and probably mediate the attachment of the 5S RNA into the large ribosomal subunit, where it forms part of the central protuberance. In Chlorobium phaeovibrioides (strain DSM 265 / 1930) (Prosthecochloris vibrioformis (strain DSM 265)), this protein is Large ribosomal subunit protein uL18.